Consider the following 188-residue polypeptide: Elongation factor P (188 aa).

It belongs to the elongation factor P family.

It localises to the cytoplasm. It participates in protein biosynthesis; polypeptide chain elongation. Involved in peptide bond synthesis. Stimulates efficient translation and peptide-bond synthesis on native or reconstituted 70S ribosomes in vitro. Probably functions indirectly by altering the affinity of the ribosome for aminoacyl-tRNA, thus increasing their reactivity as acceptors for peptidyl transferase. This Aeromonas salmonicida (strain A449) protein is Elongation factor P.